The chain runs to 52 residues: Large ribosomal subunit protein bL32c (52 aa).

This sequence belongs to the bacterial ribosomal protein bL32 family.

The protein localises to the plastid. The protein resides in the chloroplast. This is Large ribosomal subunit protein bL32c from Morus indica (Mulberry).